Consider the following 270-residue polypeptide: MKTLNQLQDLKVNKEKISMVTAYDYPSAKQVEAADIDIILVGDSLGMTVLGYDSTVQVTVADMIHHTKAVRRGAPNTYLIVDVPFGAVGVNDQYDLEIAVKLYKETDANAIKAEGAHLTQYIKNCSNMGIPVVSHLGLTPQSVGIMGYKMQAGNKEAARQLIEDAYAVQQAGAVMLVLEAVPSDLAAEISDKLDIPVIGIGAGKETDGQVLVYHDLLNYAVEHRAKFVKQFGDFSVGIDALKQYNNEVKAEQFPGEAHTYKKQIMNEVTE.

2 residues coordinate Mg(2+): D43 and D82. Residues 43-44 (DS), D82, and K112 each bind 3-methyl-2-oxobutanoate. E114 provides a ligand contact to Mg(2+). E179 (proton acceptor) is an active-site residue.

This sequence belongs to the PanB family. As to quaternary structure, homodecamer; pentamer of dimers. The cofactor is Mg(2+).

The protein resides in the cytoplasm. The enzyme catalyses 3-methyl-2-oxobutanoate + (6R)-5,10-methylene-5,6,7,8-tetrahydrofolate + H2O = 2-dehydropantoate + (6S)-5,6,7,8-tetrahydrofolate. The protein operates within cofactor biosynthesis; (R)-pantothenate biosynthesis; (R)-pantoate from 3-methyl-2-oxobutanoate: step 1/2. In terms of biological role, catalyzes the reversible reaction in which hydroxymethyl group from 5,10-methylenetetrahydrofolate is transferred onto alpha-ketoisovalerate to form ketopantoate. The chain is 3-methyl-2-oxobutanoate hydroxymethyltransferase from Staphylococcus saprophyticus subsp. saprophyticus (strain ATCC 15305 / DSM 20229 / NCIMB 8711 / NCTC 7292 / S-41).